Reading from the N-terminus, the 89-residue chain is Myrmicitoxin(1)-Pr2c (89 aa).

A signal peptide spans 1–23; sequence MEIPKLLYIAVIAIGLSGSLTCA. A propeptide spanning residues 24–61 is cleaved from the precursor; sequence TPLANPWADPEAEANPKAKATAEATAEAIAEALAEPEP. N88 is modified (asparagine amide).

This sequence belongs to the formicidae venom clade 1 family. Expressed by the venom gland.

It localises to the secreted. Functionally, vertebrate-selective toxin that causes pain by targeting voltage-gated sodium channels. The chain is Myrmicitoxin(1)-Pr2c from Pogonomyrmex rugosus (Desert harvester ant).